We begin with the raw amino-acid sequence, 187 residues long: MMTTILTIHVPSTPGRAWNMLVALQAGNIVARYAKLHLYDAFAIQESRRVDAGNEIAPLLEVEGMKVGLMTCYDLRFPELALAQALQGAEILVLPAAWVRGPLKEHHWSTLLAARALDTTCYMVAAGECGNKNIGQSRIIDPFGVTIAAASEMPALIMAEVTPERVRQVRAQLPVLNNRRFAPPQLL.

One can recognise a CN hydrolase domain in the interval 1–163 (MMTTILTIHV…PALIMAEVTP (163 aa)).

It belongs to the carbon-nitrogen hydrolase superfamily. NIT1/NIT2 family.

In terms of biological role, pseudogene resulting from a nucleotide deletion that introduces a premature stop codon at position 66. This is the C-terminal fragment. The intact protein (AC A0A140NCB4) hydrolyzes deaminated glutathione (dGSH, 2-oxoglutaramate) to alpha-ketoglutarate (alpha-KG) and cysteinylglycine, has less activity against alpha-ketoglutaramate (a-KGM) and no activity on glutathione or L-glutamine. May function as a metabolite repair enzyme. The chain is Putative protein YbeM (ybeM) from Escherichia coli (strain K12).